A 206-amino-acid chain; its full sequence is MKPLTPRQQQVFDLIKSKIEDCGMPPTRAEIARELGFRSANAAEEHLKALARKEAIEIIPGASRGIRILLEDAANEEQGLPLIGQVAAGEPILAQEHVEMHYQVDPGMFKPQADFLLRVNGESMKDIGIMDGDLLAVHKTQDVRDGQVVVARVDDDVTVKRLERKGSTVLLHAENEEFSPIHVDLESQHLSIEGLAVGIIRNTDWM.

Residues 28–48 (RAEIARELGFRSANAAEEHLK) constitute a DNA-binding region (H-T-H motif). Catalysis depends on for autocatalytic cleavage activity residues S123 and K160.

The protein belongs to the peptidase S24 family. Homodimer.

It carries out the reaction Hydrolysis of Ala-|-Gly bond in repressor LexA.. Functionally, represses a number of genes involved in the response to DNA damage (SOS response), including recA and lexA. In the presence of single-stranded DNA, RecA interacts with LexA causing an autocatalytic cleavage which disrupts the DNA-binding part of LexA, leading to derepression of the SOS regulon and eventually DNA repair. The sequence is that of LexA repressor from Vibrio atlanticus (strain LGP32) (Vibrio splendidus (strain Mel32)).